A 1025-amino-acid chain; its full sequence is Serine/threonine-protein kinase TAO2 (1025 aa).

The Protein kinase domain maps to 28-281 (FADLREIGHG…SDMLLKHRFL (254 aa)). ATP is bound by residues 34-42 (IGHGSFGAV) and Lys57. Asp151 (proton acceptor) is an active-site residue. Positions 349-373 (ESSQSVPSMSISASSQSSSVNSLAD) are enriched in low complexity. The tract at residues 349 to 377 (ESSQSVPSMSISASSQSSSVNSLADASDD) is disordered. Coiled coils occupy residues 457–650 (SALR…ECAM) and 755–876 (ILKR…EIEA). 2 disordered regions span residues 899–930 (FNQGYQAPPPGWPSRPVPRSGSHWSHGVQNTG) and 945–1025 (SASW…LSYS). Pro residues predominate over residues 905 to 914 (APPPGWPSRP). Residues 947 to 986 (SWGLHPPGSSSSLSALPSSSSSSSSSPSSSSGGRPGLLLL) show a composition bias toward low complexity. Positions 1007 to 1025 (SRSTSVTSQLSNGSHLSYS) are enriched in polar residues.

It belongs to the protein kinase superfamily. STE Ser/Thr protein kinase family. STE20 subfamily. Mg(2+) serves as cofactor.

It carries out the reaction L-seryl-[protein] + ATP = O-phospho-L-seryl-[protein] + ADP + H(+). The catalysed reaction is L-threonyl-[protein] + ATP = O-phospho-L-threonyl-[protein] + ADP + H(+). Its function is as follows. Serine/threonine-protein kinase involved in different processes such as apoptotic morphological changes, MAPK8/JNK and MAPK14/p38 MAPK signaling pathway. Activates the JNK MAP kinase pathway. The sequence is that of Serine/threonine-protein kinase TAO2 (taok2) from Xenopus laevis (African clawed frog).